Consider the following 212-residue polypeptide: uncharacterized protein (212 aa).

3 residues coordinate S-adenosyl-L-methionine: glycine 53, glutamate 74, and aspartate 97.

It belongs to the methyltransferase superfamily. YrrT family.

Functionally, could be a S-adenosyl-L-methionine-dependent methyltransferase. This is an uncharacterized protein from Bacillus mycoides (strain KBAB4) (Bacillus weihenstephanensis).